We begin with the raw amino-acid sequence, 1203 residues long: DNA-directed RNA polymerase subunit beta' (1203 aa).

Positions 60, 62, 75, and 78 each coordinate Zn(2+). Mg(2+)-binding residues include Asp449, Asp451, and Asp453. 4 residues coordinate Zn(2+): Cys818, Cys892, Cys899, and Cys902.

The protein belongs to the RNA polymerase beta' chain family. The RNAP catalytic core consists of 2 alpha, 1 beta, 1 beta' and 1 omega subunit. When a sigma factor is associated with the core the holoenzyme is formed, which can initiate transcription. It depends on Mg(2+) as a cofactor. Requires Zn(2+) as cofactor.

The catalysed reaction is RNA(n) + a ribonucleoside 5'-triphosphate = RNA(n+1) + diphosphate. DNA-dependent RNA polymerase catalyzes the transcription of DNA into RNA using the four ribonucleoside triphosphates as substrates. The sequence is that of DNA-directed RNA polymerase subunit beta' from Bacillus cereus (strain ATCC 14579 / DSM 31 / CCUG 7414 / JCM 2152 / NBRC 15305 / NCIMB 9373 / NCTC 2599 / NRRL B-3711).